A 227-amino-acid chain; its full sequence is Phosphatidylserine decarboxylase proenzyme (227 aa).

Catalysis depends on Ser184, which acts as the Schiff-base intermediate with substrate; via pyruvic acid. Ser184 carries the pyruvic acid (Ser); by autocatalysis modification.

This sequence belongs to the phosphatidylserine decarboxylase family. PSD-A subfamily. In terms of assembly, heterodimer of a large membrane-associated beta subunit and a small pyruvoyl-containing alpha subunit. It depends on pyruvate as a cofactor. Post-translationally, is synthesized initially as an inactive proenzyme. Formation of the active enzyme involves a self-maturation process in which the active site pyruvoyl group is generated from an internal serine residue via an autocatalytic post-translational modification. Two non-identical subunits are generated from the proenzyme in this reaction, and the pyruvate is formed at the N-terminus of the alpha chain, which is derived from the carboxyl end of the proenzyme. The post-translation cleavage follows an unusual pathway, termed non-hydrolytic serinolysis, in which the side chain hydroxyl group of the serine supplies its oxygen atom to form the C-terminus of the beta chain, while the remainder of the serine residue undergoes an oxidative deamination to produce ammonia and the pyruvoyl prosthetic group on the alpha chain.

It localises to the cell membrane. The catalysed reaction is a 1,2-diacyl-sn-glycero-3-phospho-L-serine + H(+) = a 1,2-diacyl-sn-glycero-3-phosphoethanolamine + CO2. The protein operates within phospholipid metabolism; phosphatidylethanolamine biosynthesis; phosphatidylethanolamine from CDP-diacylglycerol: step 2/2. Functionally, catalyzes the formation of phosphatidylethanolamine (PtdEtn) from phosphatidylserine (PtdSer). This is Phosphatidylserine decarboxylase proenzyme from Ehrlichia ruminantium (strain Gardel).